Here is a 489-residue protein sequence, read N- to C-terminus: ATP-dependent zinc metalloprotease FtsH 3 (489 aa).

The Cytoplasmic portion of the chain corresponds to 1–14; it reads MNPRPVRPGGSLQQ. Residues 15-31 traverse the membrane as a helical segment; it reads SLLALGSLSVAVGLAVW. The Extracellular segment spans residues 32-489; the sequence is QQRTLGRGRS…GPRPARPAMN (458 aa). 95 to 102 contributes to the ATP binding site; it reads GPPGTGKT. Zn(2+) is bound at residue His315. Glu316 is an active-site residue. Residues His319 and Asp391 each coordinate Zn(2+).

It in the central section; belongs to the AAA ATPase family. This sequence in the C-terminal section; belongs to the peptidase M41 family. Homohexamer. The cofactor is Zn(2+).

The protein localises to the cell membrane. Functionally, acts as a processive, ATP-dependent zinc metallopeptidase for both cytoplasmic and membrane proteins. Plays a role in the quality control of integral membrane proteins. The chain is ATP-dependent zinc metalloprotease FtsH 3 from Sphaerobacter thermophilus (strain ATCC 49802 / DSM 20745 / KCCM 41009 / NCIMB 13125 / S 6022).